We begin with the raw amino-acid sequence, 247 residues long: Uridylate kinase (247 aa).

Position 16 to 19 (16 to 19) interacts with ATP; sequence KLSG. Gly58 contacts UMP. ATP-binding residues include Gly59 and Arg63. Residues Asp78 and 139–146 contribute to the UMP site; that span reads TGNPFFTT. Thr166, Tyr172, and Asp175 together coordinate ATP.

It belongs to the UMP kinase family. In terms of assembly, homohexamer.

It is found in the cytoplasm. The catalysed reaction is UMP + ATP = UDP + ADP. Its pathway is pyrimidine metabolism; CTP biosynthesis via de novo pathway; UDP from UMP (UMPK route): step 1/1. Inhibited by UTP. Catalyzes the reversible phosphorylation of UMP to UDP. This chain is Uridylate kinase, found in Xylella fastidiosa (strain 9a5c).